The following is a 279-amino-acid chain: NADPH-dependent 7-cyano-7-deazaguanine reductase (279 aa).

Substrate is bound at residue 86 to 88 (IES). Position 88–89 (88–89 (SK)) interacts with NADPH. Cys187 serves as the catalytic Thioimide intermediate. Asp194 serves as the catalytic Proton donor. Residue 226–227 (HE) participates in substrate binding. 255–256 (RG) lines the NADPH pocket.

The protein belongs to the GTP cyclohydrolase I family. QueF type 2 subfamily. As to quaternary structure, homodimer.

It localises to the cytoplasm. It catalyses the reaction 7-aminomethyl-7-carbaguanine + 2 NADP(+) = 7-cyano-7-deazaguanine + 2 NADPH + 3 H(+). The protein operates within tRNA modification; tRNA-queuosine biosynthesis. In terms of biological role, catalyzes the NADPH-dependent reduction of 7-cyano-7-deazaguanine (preQ0) to 7-aminomethyl-7-deazaguanine (preQ1). The polypeptide is NADPH-dependent 7-cyano-7-deazaguanine reductase (Histophilus somni (strain 129Pt) (Haemophilus somnus)).